A 251-amino-acid chain; its full sequence is Probable inactive cytidine deaminase 4 (251 aa).

Substrate is bound at residue 61–63; the sequence is NVE. Glu-76 acts as the Proton donor in catalysis. The CMP/dCMP-type deaminase domain occupies 136–251; it reads EHCSHLKCRA…VFRCHKTAEN (116 aa).

It belongs to the cytidine and deoxycytidylate deaminase family. As to quaternary structure, homodimer.

In Arabidopsis thaliana (Mouse-ear cress), this protein is Probable inactive cytidine deaminase 4 (CDA4).